Consider the following 321-residue polypeptide: uncharacterized protein (321 aa).

Over 1–6 the chain is Extracellular; sequence MDIIRK. A helical membrane pass occupies residues 7–29; it reads ISHFAGQTFGIWVIVFAVLGFSF. Residues 30–34 lie on the Cytoplasmic side of the membrane; the sequence is PSLFT. The helical transmembrane segment at 35 to 57 threads the bilayer; it reads WISSYITIFLGIIMFGMGLTLQA. Over 58–69 the chain is Extracellular; the sequence is DDFKELVRKPWQ. Residues 70-92 traverse the membrane as a helical segment; that stretch reads VIIGVIAQYTIMPLVAFGLAFGL. The Cytoplasmic segment spans residues 93–97; sequence HLPAE. Residues 98–120 form a helical membrane-spanning segment; that stretch reads IAVGVILVGCCPGGTASNVMTFL. The Extracellular segment spans residues 121–129; sequence AKGNTALSV. A helical transmembrane segment spans residues 130–150; that stretch reads AVTTISTLLAPVVTPLLIMLF. Residues 151-159 are Cytoplasmic-facing; sequence AKEWLPVSP. The chain crosses the membrane as a helical span at residues 160-180; that stretch reads GSLFISILQAVLFPIIAGLIV. The Extracellular portion of the chain corresponds to 181-190; it reads KMFFRKQVAK. Residues 191–211 form a helical membrane-spanning segment; the sequence is AVHALPLVSVIGIVAIVSAVV. Residues 212 to 221 are Cytoplasmic-facing; the sequence is SGNRENLLQS. Residues 222-242 traverse the membrane as a helical segment; sequence GLLIFSVVILHNGIGYLLGFL. Residues 243–267 lie on the Extracellular side of the membrane; the sequence is CAKLLKMDYPSQKAIAIEVGMQNSG. The chain crosses the membrane as a helical span at residues 268–288; that stretch reads LGAALATAHFSPLSAVPSAIF. Topologically, residues 289 to 321 are cytoplasmic; sequence SVWHNLSGSMLATYWSKKVKKKQAGSKSSNLSL.

Belongs to the bile acid:sodium symporter (BASS) (TC 2.A.28) family.

It localises to the cell membrane. This is an uncharacterized protein from Bacillus subtilis (strain 168).